A 147-amino-acid chain; its full sequence is UPF0208 membrane protein SO_2914 (147 aa).

A run of 2 helical transmembrane segments spans residues 40–60 (LAIL…LYTY) and 68–88 (ALTI…WLGW).

It belongs to the UPF0208 family.

The protein resides in the cell inner membrane. The polypeptide is UPF0208 membrane protein SO_2914 (Shewanella oneidensis (strain ATCC 700550 / JCM 31522 / CIP 106686 / LMG 19005 / NCIMB 14063 / MR-1)).